Consider the following 459-residue polypeptide: Putrescine aminotransferase (459 aa).

Residues 150-151 (GT) and Gln-274 contribute to the pyridoxal 5'-phosphate site. Position 300 is an N6-(pyridoxal phosphate)lysine (Lys-300). Thr-332 is a binding site for pyridoxal 5'-phosphate.

It belongs to the class-III pyridoxal-phosphate-dependent aminotransferase family. Putrescine aminotransferase subfamily. Requires pyridoxal 5'-phosphate as cofactor.

The enzyme catalyses an alkane-alpha,omega-diamine + 2-oxoglutarate = an omega-aminoaldehyde + L-glutamate. It carries out the reaction putrescine + 2-oxoglutarate = 1-pyrroline + L-glutamate + H2O. The catalysed reaction is cadaverine + 2-oxoglutarate = 5-aminopentanal + L-glutamate. The protein operates within amine and polyamine degradation; putrescine degradation; 4-aminobutanal from putrescine (transaminase route): step 1/1. Catalyzes the aminotransferase reaction from putrescine to 2-oxoglutarate, leading to glutamate and 4-aminobutanal, which spontaneously cyclizes to form 1-pyrroline. This is the first step in one of two pathways for putrescine degradation, where putrescine is converted into 4-aminobutanoate (gamma-aminobutyrate or GABA) via 4-aminobutanal. Also functions as a cadaverine transaminase in a a L-lysine degradation pathway to succinate that proceeds via cadaverine, glutarate and L-2-hydroxyglutarate. The polypeptide is Putrescine aminotransferase (Salmonella choleraesuis (strain SC-B67)).